A 186-amino-acid polypeptide reads, in one-letter code: Ribosome-recycling factor (186 aa).

This sequence belongs to the RRF family.

It is found in the cytoplasm. Functionally, responsible for the release of ribosomes from messenger RNA at the termination of protein biosynthesis. May increase the efficiency of translation by recycling ribosomes from one round of translation to another. In Polaromonas sp. (strain JS666 / ATCC BAA-500), this protein is Ribosome-recycling factor.